Reading from the N-terminus, the 314-residue chain is Ribosomal protein L11 methyltransferase (314 aa).

S-adenosyl-L-methionine-binding residues include threonine 161, glycine 182, aspartate 204, and asparagine 248.

It belongs to the methyltransferase superfamily. PrmA family.

It localises to the cytoplasm. It catalyses the reaction L-lysyl-[protein] + 3 S-adenosyl-L-methionine = N(6),N(6),N(6)-trimethyl-L-lysyl-[protein] + 3 S-adenosyl-L-homocysteine + 3 H(+). In terms of biological role, methylates ribosomal protein L11. In Listeria monocytogenes serotype 4a (strain HCC23), this protein is Ribosomal protein L11 methyltransferase.